Consider the following 172-residue polypeptide: Thioredoxin Y1, chloroplastic (172 aa).

Residues Met1–Arg62 constitute a chloroplast transit peptide. The Thioredoxin domain maps to Ile63 to Lys169. Active-site nucleophile residues include Cys93 and Cys96. An intrachain disulfide couples Cys93 to Cys96.

Belongs to the thioredoxin family. Plant Y-type subfamily. Expressed in roots and seeds.

The protein localises to the plastid. Its subcellular location is the chloroplast stroma. Its function is as follows. Thiol-disulfide oxidoreductase that poorly activates chloroplastic malate dehydrogenase (NADP-MDH) and fructose-1,6-bisphosphatase. Provides reducing equivalents for peroxiredoxin Q. The protein is Thioredoxin Y1, chloroplastic of Arabidopsis thaliana (Mouse-ear cress).